Reading from the N-terminus, the 184-residue chain is ATP-dependent protease subunit HslV (184 aa).

Threonine 11 is a catalytic residue. The Na(+) site is built by alanine 165, cysteine 168, and threonine 171.

The protein belongs to the peptidase T1B family. HslV subfamily. A double ring-shaped homohexamer of HslV is capped on each side by a ring-shaped HslU homohexamer. The assembly of the HslU/HslV complex is dependent on binding of ATP.

It localises to the cytoplasm. It carries out the reaction ATP-dependent cleavage of peptide bonds with broad specificity.. Its activity is regulated as follows. Allosterically activated by HslU binding. Functionally, protease subunit of a proteasome-like degradation complex believed to be a general protein degrading machinery. The chain is ATP-dependent protease subunit HslV from Zymomonas mobilis subsp. mobilis (strain ATCC 31821 / ZM4 / CP4).